The following is a 558-amino-acid chain: Kelch-like protein 23 (558 aa).

In terms of domain architecture, BTB spans 36-104 (TDITLQCPSG…AYTSQIEITE (69 aa)). The 102-residue stretch at 139 to 240 (CIGMHSFAEF…DPVYLKTALG (102 aa)) folds into the BACK domain. 6 Kelch repeats span residues 274-320 (TMYI…CLGP), 321-369 (NIYV…TLGG), 370-416 (CVYA…VLHD), 418-466 (IYVI…PLEN), 467-508 (KLYL…IMNG), and 510-557 (IYVT…CVYN).

In Pongo abelii (Sumatran orangutan), this protein is Kelch-like protein 23 (KLHL23).